A 455-amino-acid polypeptide reads, in one-letter code: uncharacterized protein (455 aa).

This is an uncharacterized protein from Acanthamoeba polyphaga (Amoeba).